Here is a 704-residue protein sequence, read N- to C-terminus: Capsule polysaccharide modification protein LipA (704 aa).

It is found in the cell inner membrane. In terms of biological role, involved in the phospholipid modification of the capsular polysaccharide, a strong requirement for its translocation to the cell surface. The polypeptide is Capsule polysaccharide modification protein LipA (lipA) (Neisseria meningitidis serogroup B (strain ATCC BAA-335 / MC58)).